The primary structure comprises 377 residues: tRNA N6-adenosine threonylcarbamoyltransferase (377 aa).

Residues H129 and H133 each contribute to the Fe cation site. Substrate contacts are provided by residues L151–G155, D184, G197, and N298. D326 contributes to the Fe cation binding site. Positions D358–A377 are disordered.

This sequence belongs to the KAE1 / TsaD family. Fe(2+) is required as a cofactor.

The protein resides in the cytoplasm. It catalyses the reaction L-threonylcarbamoyladenylate + adenosine(37) in tRNA = N(6)-L-threonylcarbamoyladenosine(37) in tRNA + AMP + H(+). Functionally, required for the formation of a threonylcarbamoyl group on adenosine at position 37 (t(6)A37) in tRNAs that read codons beginning with adenine. Is involved in the transfer of the threonylcarbamoyl moiety of threonylcarbamoyl-AMP (TC-AMP) to the N6 group of A37, together with TsaE and TsaB. TsaD likely plays a direct catalytic role in this reaction. The chain is tRNA N6-adenosine threonylcarbamoyltransferase from Maricaulis maris (strain MCS10) (Caulobacter maris).